We begin with the raw amino-acid sequence, 344 residues long: Hypoxia-inducible factor 1-alpha inhibitor (344 aa).

An N-acetylalanine modification is found at Ala-2. In terms of domain architecture, JmjC spans 133-303; that stretch reads GRVYLQQTLN…PKRIEYPLKA (171 aa). Tyr-136 contacts 2-oxoglutarate. Residues Asp-143 and 173–174 contribute to the substrate site; that span reads LT. 2-oxoglutarate is bound at residue Thr-187. Fe cation-binding residues include His-190 and Asp-192. A substrate-binding site is contributed by 192 to 194; the sequence is DEQ. Asn-196 and Lys-205 together coordinate 2-oxoglutarate. 229-230 contacts substrate; sequence RQ. His-270 contacts Fe cation. Residue Asn-285 participates in 2-oxoglutarate binding. Residues Ala-291 and Asn-312 each contribute to the substrate site.

As to quaternary structure, homodimer; homodimerization is essential for catalytic activity. Fe(2+) serves as cofactor.

It is found in the nucleus. The protein localises to the cytoplasm. Its subcellular location is the perinuclear region. It catalyses the reaction L-asparaginyl-[hypoxia-inducible factor alpha subunit] + 2-oxoglutarate + O2 = (3S)-3-hydroxy-L-asparaginyl-[hypoxia-inducible factor alpha subunit] + succinate + CO2. It carries out the reaction L-histidyl-[ankyrin-repeat domain protein] + 2-oxoglutarate + O2 = (3S)-3-hydroxy-L-histidyl-[ankyrin-repeat domain protein] + succinate + CO2. The enzyme catalyses L-asparaginyl-[ankyrin-repeat domain protein] + 2-oxoglutarate + O2 = (3S)-3-hydroxy-L-asparaginyl-[ankyrin-repeat domain protein] + succinate + CO2. The catalysed reaction is L-aspartyl-[ankyrin-repeat domain protein] + 2-oxoglutarate + O2 = (3S)-3-hydroxy-L-aspartyl-[ankyrin-repeat domain protein] + succinate + CO2. In terms of biological role, hydroxylates a specific Asn residue in the C-terminal transactivation domain (CAD) of HIF-1 alpha. The hydroxylation prevents interaction of HIF-1 with transcriptional coactivators. Also hydroxylates specific Asn, Asp and His residues within ankyrin repeat domain-containing proteins. The chain is Hypoxia-inducible factor 1-alpha inhibitor (hif1an) from Danio rerio (Zebrafish).